Here is a 308-residue protein sequence, read N- to C-terminus: uncharacterized protein (308 aa).

Positions 158–221 (GDSNAETFEE…DSINHGESSE (64 aa)) are disordered. Positions 206 to 221 (RNGDRSDSINHGESSE) are enriched in basic and acidic residues.

This is an uncharacterized protein from Arabidopsis thaliana (Mouse-ear cress).